A 335-amino-acid chain; its full sequence is Glyceraldehyde-3-phosphate dehydrogenase (335 aa).

NAD(+) is bound by residues Arg-15–Ile-16 and Asp-37. Residues Ser-155–Thr-157, Thr-186, Arg-201, Thr-214–Gly-215, and Arg-237 each bind D-glyceraldehyde 3-phosphate. Cys-156 (nucleophile) is an active-site residue. Positions 301 and 318 each coordinate NAD(+).

Belongs to the glyceraldehyde-3-phosphate dehydrogenase family. In terms of assembly, homotetramer.

It localises to the cytoplasm. The enzyme catalyses D-glyceraldehyde 3-phosphate + phosphate + NADP(+) = (2R)-3-phospho-glyceroyl phosphate + NADPH + H(+). It catalyses the reaction D-glyceraldehyde 3-phosphate + phosphate + NAD(+) = (2R)-3-phospho-glyceroyl phosphate + NADH + H(+). It participates in carbohydrate degradation; glycolysis; pyruvate from D-glyceraldehyde 3-phosphate: step 1/5. The chain is Glyceraldehyde-3-phosphate dehydrogenase (gap) from Haloarcula vallismortis (Halobacterium vallismortis).